Consider the following 294-residue polypeptide: MNTNQSNPNTDLTDDANIEHTLHRLLTQANNHFDDTVKIDGQSLDLGKDLEQVMMDNLDCTDIFDSDIASQKHLTLESLFNDEHNTDSSTLLEMQRSANDSLVGIDLDRHKKGYTGKASLDKSTNQNNVHKPDKEQKNYKIDKPTIKKKKSLLKTTNEPMLSPASLSPSSSLASSDANESHLKIESMITDITSKIDSARQDIVSATKPAKFTNEFTISQISEMKARIINTHKLLLNFNFIKEGYARSCIQLKKSMDSLKDSEIHRAHLLVENDDLKQQILELTQKLNEKSSKES.

The disordered stretch occupies residues 114-178 (YTGKASLDKS…SSSLASSDAN (65 aa)). The span at 130–145 (HKPDKEQKNYKIDKPT) shows a compositional bias: basic and acidic residues. Over residues 153 to 175 (LKTTNEPMLSPASLSPSSSLASS) the composition is skewed to low complexity.

It is found in the cytoplasm. The protein localises to the nucleus. In terms of biological role, involved in cation homeostasis and in the regulation of the cation stress signaling cascades. Also involved in bipolar budding. This is Protein ATC1/LIC4 (ATC1) from Saccharomyces cerevisiae (strain ATCC 204508 / S288c) (Baker's yeast).